Here is a 226-residue protein sequence, read N- to C-terminus: Enolase-phosphatase E1 (226 aa).

Belongs to the HAD-like hydrolase superfamily. MasA/MtnC family. In terms of assembly, monomer. Mg(2+) is required as a cofactor.

It catalyses the reaction 5-methylsulfanyl-2,3-dioxopentyl phosphate + H2O = 1,2-dihydroxy-5-(methylsulfanyl)pent-1-en-3-one + phosphate. Its pathway is amino-acid biosynthesis; L-methionine biosynthesis via salvage pathway; L-methionine from S-methyl-5-thio-alpha-D-ribose 1-phosphate: step 3/6. The protein operates within amino-acid biosynthesis; L-methionine biosynthesis via salvage pathway; L-methionine from S-methyl-5-thio-alpha-D-ribose 1-phosphate: step 4/6. Its function is as follows. Bifunctional enzyme that catalyzes the enolization of 2,3-diketo-5-methylthiopentyl-1-phosphate (DK-MTP-1-P) into the intermediate 2-hydroxy-3-keto-5-methylthiopentenyl-1-phosphate (HK-MTPenyl-1-P), which is then dephosphorylated to form the acireductone 1,2-dihydroxy-3-keto-5-methylthiopentene (DHK-MTPene). The polypeptide is Enolase-phosphatase E1 (Shewanella frigidimarina (strain NCIMB 400)).